The primary structure comprises 88 residues: Three-finger toxin 3FTx-2 (88 aa).

An N-terminal signal peptide occupies residues 1 to 21; it reads MKTLLLTLVVVTIVCLDLGNT. Cystine bridges form between Cys27-Cys48, Cys41-Cys66, Cys70-Cys81, and Cys82-Cys87.

It belongs to the three-finger toxin family. Ancestral subfamily. Orphan group II sub-subfamily. As to expression, expressed by the venom gland.

It localises to the secreted. Binds with low affinity to muscular (alpha-1-beta-1-delta-epsilon/CHRNA1-CHRNB1-CHRND-CHRNE) and very low affinity to neuronal (alpha-7/CHRNA7) nicotinic acetylcholine receptor (nAChR). This chain is Three-finger toxin 3FTx-2, found in Micrurus corallinus (Brazilian coral snake).